The primary structure comprises 430 residues: Adenylosuccinate synthetase (430 aa).

Residues 12-18 and 40-42 contribute to the GTP site; these read GDEGKGK and GHT. Aspartate 13 functions as the Proton acceptor in the catalytic mechanism. Residues aspartate 13 and glycine 40 each contribute to the Mg(2+) site. IMP is bound by residues 13–16, 38–41, threonine 130, arginine 144, glutamine 224, threonine 239, and arginine 303; these read DEGK and NAGH. Histidine 41 (proton donor) is an active-site residue. 299–305 provides a ligand contact to substrate; it reads TNTGRPR. GTP-binding positions include arginine 305, 331–333, and 413–415; these read KLD and STS.

This sequence belongs to the adenylosuccinate synthetase family. Homodimer. Mg(2+) serves as cofactor.

The protein resides in the cytoplasm. It catalyses the reaction IMP + L-aspartate + GTP = N(6)-(1,2-dicarboxyethyl)-AMP + GDP + phosphate + 2 H(+). Its pathway is purine metabolism; AMP biosynthesis via de novo pathway; AMP from IMP: step 1/2. Functionally, plays an important role in the de novo pathway of purine nucleotide biosynthesis. Catalyzes the first committed step in the biosynthesis of AMP from IMP. In Rhodopseudomonas palustris (strain BisB5), this protein is Adenylosuccinate synthetase.